The following is a 126-amino-acid chain: Probable prefoldin subunit 4 (126 aa).

It belongs to the prefoldin subunit beta family. Heterohexamer of two PFD-alpha type and four PFD-beta type subunits.

In terms of biological role, binds specifically to cytosolic chaperonin (c-CPN) and transfers target proteins to it. Binds to nascent polypeptide chain and promotes folding in an environment in which there are many competing pathways for nonnative proteins. The protein is Probable prefoldin subunit 4 (pfd-4) of Caenorhabditis elegans.